The sequence spans 308 residues: Transcriptional adapter 1-2 (308 aa).

Belongs to the TADA1 family. As to quaternary structure, component of the Spt-Ada-Gcn5 acetyltransferase (SAGA) complex consisting of wda/Taf5L, Saf6, Taf9, Taf10b, Taf12, Ada1, Spt3, Spt7, Spt20, Sf3b3, Sf3b5, Nipped-A/Tra1, a histone acetyltransferase (HAT) module made up of Gcn5, Ada2b (Isoform B), Ada3 and Sgf29, and a deubiquitinase (DUB) module made up of not/nonstop, Sgf11 and e(y)2 tethered to SAGA by Atxn7. Not a component of the Ada2a-containing ATAC complex.

It is found in the nucleus. Functionally, component of the transcription regulatory complex SAGA, a multiprotein complex that activates transcription by remodeling chromatin and mediating histone acetylation and deubiquitination. The SAGA complex predominantly acetylates histone H3. This Drosophila melanogaster (Fruit fly) protein is Transcriptional adapter 1-2.